Here is a 560-residue protein sequence, read N- to C-terminus: Vanillyl-alcohol oxidase (560 aa).

The FAD-binding PCMH-type domain occupies 67–272 (DYFLASAIVA…TKIGIWLMPN (206 aa)). The active site involves Tyr108. His422 is subject to Tele-8alpha-FAD histidine. Active-site residues include Tyr503 and Arg504.

The protein to bacterial flavocytochrome p-cresol methyl hydroxylase. In terms of assembly, homooctamer (tetramer of tightly interacting dimers). FAD serves as cofactor.

It localises to the peroxisome. Its subcellular location is the cytoplasm. It carries out the reaction 4-hydroxy-3-methoxy-benzenemethanol + O2 = vanillin + H2O2. Competitively inhibited by cinnamyl and coniferyl alcohols and by isoeugenol. Functionally, catalyzes the conversion of vanillin alcohol to vanillin, and also the conversion of a wide range of phenolic compounds bearing side chains of variable size at the para position of the aromatic ring. Crucial for the degradation of the secondary metabolites derived from the degradation of the lignin. Catalyzes besides the oxidation of 4-hydroxybenzyl alcohols, the oxidative deamination of 4-hydroxybenzylamines, the oxidative demethylation of 4-(methoxy-methyl)phenols and the oxidative hydration of 4-allylphenols. Most active with 4-allylphenols. This is Vanillyl-alcohol oxidase (VAOA) from Penicillium simplicissimum.